The primary structure comprises 308 residues: MGVPAVPEASSPRWGTLLLAIFLAASRGLVAAFKVTTPYSLYVCPEGQNATLTCRILGPVSKGHDVTIYKTWYLSSRGEVQMCKEHRPIRNFTLQHLQHHGSHLKANASHDQPQKHGLELASDHHGNFSITLRNVTPRDSGLYCCLVIELKNHHPEQRFYGSMELQVQAGKGSGSTCMASNEQDSDSITAAALATGACIVGILCLPLILLLVYKQRQVASHRRAQELVRMDSNTQGIENPGFETTPPFQGMPEAKTRPPLSYVAQRQPSESGRYLLSDPSTPLSPPGPGDVFFPSLDPVPDSPNSEAI.

The N-terminal stretch at 1–32 (MGVPAVPEASSPRWGTLLLAIFLAASRGLVAA) is a signal peptide. One can recognise an Ig-like V-type domain in the interval 33–167 (FKVTTPYSLY…RFYGSMELQV (135 aa)). At 33–191 (FKVTTPYSLY…EQDSDSITAA (159 aa)) the chain is on the extracellular side. 3 N-linked (GlcNAc...) asparagine glycosylation sites follow: N49, N91, and N127. A disulfide bridge links C54 with C145. The chain crosses the membrane as a helical span at residues 192–212 (ALATGACIVGILCLPLILLLV). Residues 213 to 308 (YKQRQVASHR…VPDSPNSEAI (96 aa)) are Cytoplasmic-facing. Residues 230–308 (MDSNTQGIEN…VPDSPNSEAI (79 aa)) form a disordered region. A Phosphoserine modification is found at S232.

Post-translationally, at the cell surface, may be cleaved by MMP14. N-glycosylated. Expressed in spleen, thymus, bone marrow, lymph node, and in T-cells within the lamina propria of the small intestine. Detected on CD4+ and CD8+ T-cells, bone marrow-derived dendritic cells (BMDCs), peritoneal macrophages, neutrophils, and natural killer (NK) cells. In spleen and lymph nodes, highly expressed on CD4+ T-cell populations, and at lower levels on CD8+ T-cells. In thymus, has low expression on CD4+ cells and CD8+ cells, and not detected on CD4+CD8+ cells. Expressed in splenic and peritoneal CD11b cells. Not detected in most B cells and NK cells (at protein level). Also detected at lower levels in non-hematopoeitic tissues such as heart, brain, lung, kidney, muscle, ovary, and testis.

Its subcellular location is the cell membrane. Its function is as follows. Immunoregulatory receptor which inhibits the T-cell response. May promote differentiation of embryonic stem cells, by inhibiting BMP4 signaling. May stimulate MMP14-mediated MMP2 activation. The sequence is that of V-type immunoglobulin domain-containing suppressor of T-cell activation from Mus musculus (Mouse).